The chain runs to 171 residues: Cyclin-dependent kinase inhibitor 2A (171 aa).

Residues 33–42 are compositionally biased toward basic and acidic residues; sequence ASMHTKHESE. Residues 33 to 52 are disordered; sequence ASMHTKHESEESFSGEKLTE. 3 ANK repeats span residues 45–74, 78–106, and 111–140; these read FSGE…NPNA, FGRS…EPNT, and TLTL…RLDV.

The protein belongs to the CDKN2 cyclin-dependent kinase inhibitor family. As to quaternary structure, heterodimer with CDK4 or CDK6. Predominamt P16 complexes contained CDK6. Interacts with CDK4 (both 'T-172'-phosphorylated and non-phosphorylated forms); the interaction inhibits cyclin D-CDK4 kinase activity. Interacts with ISCO2. In terms of tissue distribution, expressed predominantly in lung and testis. In the testis, restricted to germ cells in the seminiferous epithelium. Not detected in premeiotic spermatogonia but high levels found in postmeiotic spermatids. In primary tumors, low levels detected in melanocytic hyperplasias. Higher levels found in non-metastatic and metastatic melanomas.

Its subcellular location is the cytoplasm. It is found in the nucleus. Functionally, acts as a negative regulator of the proliferation of normal cells by interacting strongly with CDK4 and CDK6. This inhibits their ability to interact with cyclins D and to phosphorylate the retinoblastoma protein. The chain is Cyclin-dependent kinase inhibitor 2A from Monodelphis domestica (Gray short-tailed opossum).